A 184-amino-acid polypeptide reads, in one-letter code: GTP cyclohydrolase 1 (184 aa).

Positions 75, 78, and 146 each coordinate Zn(2+).

It belongs to the GTP cyclohydrolase I family. As to quaternary structure, toroid-shaped homodecamer, composed of two pentamers of five dimers.

It carries out the reaction GTP + H2O = 7,8-dihydroneopterin 3'-triphosphate + formate + H(+). The protein operates within cofactor biosynthesis; 7,8-dihydroneopterin triphosphate biosynthesis; 7,8-dihydroneopterin triphosphate from GTP: step 1/1. In Pseudoalteromonas atlantica (strain T6c / ATCC BAA-1087), this protein is GTP cyclohydrolase 1.